Reading from the N-terminus, the 199-residue chain is UPF0301 protein Anae109_0457 (199 aa).

The protein belongs to the UPF0301 (AlgH) family.

This chain is UPF0301 protein Anae109_0457, found in Anaeromyxobacter sp. (strain Fw109-5).